The chain runs to 738 residues: Ethylene receptor (738 aa).

3 helical membrane passes run isoleucine 23–valine 43, valine 54–tryptophan 74, and isoleucine 89–isoleucine 109. 2 residues coordinate Cu cation: cysteine 65 and histidine 69. The GAF domain occupies aspartate 158–leucine 307. A Histidine kinase domain is found at valine 350–glutamate 589. At histidine 353 the chain carries Phosphohistidine; by autocatalysis. The Response regulatory domain maps to lysine 615–leucine 730. Residue aspartate 663 is modified to 4-aspartylphosphate.

This sequence belongs to the ethylene receptor family. Homodimer; disulfide-linked. Cu cation is required as a cofactor. Activation probably requires a transfer of a phosphate group between a His in the transmitter domain and an Asp of the receiver domain. In terms of tissue distribution, higher expression in arils than in seeds.

Its subcellular location is the endoplasmic reticulum membrane. The catalysed reaction is ATP + protein L-histidine = ADP + protein N-phospho-L-histidine.. Functionally, may act early in the ethylene signal transduction pathway, possibly as an ethylene receptor, or as a regulator of the pathway. The polypeptide is Ethylene receptor (ETR1) (Passiflora edulis (Passion fruit)).